The following is a 103-amino-acid chain: Putative double-stranded DNA mimic protein APJL_1366 (103 aa).

It belongs to the putative dsDNA mimic protein family.

Functionally, may act as a double-stranded DNA (dsDNA) mimic. Probably regulates the activity of a dsDNA-binding protein. This Actinobacillus pleuropneumoniae serotype 3 (strain JL03) protein is Putative double-stranded DNA mimic protein APJL_1366.